Consider the following 93-residue polypeptide: Small ribosomal subunit protein uS19 (93 aa).

This sequence belongs to the universal ribosomal protein uS19 family.

Its function is as follows. Protein S19 forms a complex with S13 that binds strongly to the 16S ribosomal RNA. The sequence is that of Small ribosomal subunit protein uS19 from Geotalea daltonii (strain DSM 22248 / JCM 15807 / FRC-32) (Geobacter daltonii).